The sequence spans 277 residues: Exosome complex component Rrp42 (277 aa).

It belongs to the RNase PH family. Rrp42 subfamily. As to quaternary structure, component of the archaeal exosome complex. Forms a hexameric ring-like arrangement composed of 3 Rrp41-Rrp42 heterodimers. The hexameric ring associates with a trimer of Rrp4 and/or Csl4 subunits.

It is found in the cytoplasm. In terms of biological role, non-catalytic component of the exosome, which is a complex involved in RNA degradation. Contributes to the structuring of the Rrp41 active site. The sequence is that of Exosome complex component Rrp42 from Pyrococcus furiosus (strain ATCC 43587 / DSM 3638 / JCM 8422 / Vc1).